Here is a 36-residue protein sequence, read N- to C-terminus: Dermonecrotic toxin LgSicTox-beta-LOXN1/LOXN7 (36 aa).

Belongs to the arthropod phospholipase D family. Class II subfamily. Mg(2+) is required as a cofactor. In terms of processing, contains 2 disulfide bonds. As to expression, expressed by the venom gland.

The protein localises to the secreted. The catalysed reaction is an N-(acyl)-sphingosylphosphocholine = an N-(acyl)-sphingosyl-1,3-cyclic phosphate + choline. It catalyses the reaction an N-(acyl)-sphingosylphosphoethanolamine = an N-(acyl)-sphingosyl-1,3-cyclic phosphate + ethanolamine. It carries out the reaction a 1-acyl-sn-glycero-3-phosphocholine = a 1-acyl-sn-glycero-2,3-cyclic phosphate + choline. The enzyme catalyses a 1-acyl-sn-glycero-3-phosphoethanolamine = a 1-acyl-sn-glycero-2,3-cyclic phosphate + ethanolamine. Its function is as follows. Dermonecrotic toxins cleave the phosphodiester linkage between the phosphate and headgroup of certain phospholipids (sphingolipid and lysolipid substrates), forming an alcohol (often choline) and a cyclic phosphate. This toxin acts on sphingomyelin (SM). It may also act on ceramide phosphoethanolamine (CPE), lysophosphatidylcholine (LPC) and lysophosphatidylethanolamine (LPE), but not on lysophosphatidylserine (LPS), and lysophosphatidylglycerol (LPG). It acts by transphosphatidylation, releasing exclusively cyclic phosphate products as second products. Induces dermonecrosis, hemolysis, increased vascular permeability, edema, inflammatory response, and platelet aggregation. The sequence is that of Dermonecrotic toxin LgSicTox-beta-LOXN1/LOXN7 from Loxosceles gaucho (Spider).